Consider the following 328-residue polypeptide: L-lactate dehydrogenase (328 aa).

Residues V18, E39, K46, Y71, and 85–86 (GA) each bind NAD(+). Residues Q88 and R94 each coordinate substrate. NAD(+) is bound by residues S107, 124–126 (AAN), and S149. Substrate is bound at residue 126-129 (NPVD). Position 154–157 (154–157 (DSAR)) interacts with substrate. Beta-D-fructose 1,6-bisphosphate contacts are provided by R159 and H174. H181 acts as the Proton acceptor in catalysis. Y226 bears the Phosphotyrosine mark. T235 lines the substrate pocket.

It belongs to the LDH/MDH superfamily. LDH family. Homotetramer.

The protein localises to the cytoplasm. It carries out the reaction (S)-lactate + NAD(+) = pyruvate + NADH + H(+). It participates in fermentation; pyruvate fermentation to lactate; (S)-lactate from pyruvate: step 1/1. Allosterically activated by fructose 1,6-bisphosphate (FBP). In terms of biological role, catalyzes the conversion of lactate to pyruvate. The polypeptide is L-lactate dehydrogenase (Streptococcus pneumoniae (strain 70585)).